Reading from the N-terminus, the 315-residue chain is Transcription factor MafAa (315 aa).

Over residues 52-104 the composition is skewed to low complexity; the sequence is STPISTPCSSVPSSPSFCAPSPGSQPGQNLVNGVNNNNNNSGNGNNNTQGSSG. Disordered stretches follow at residues 52 to 108 and 169 to 191; these read STPI…KPQM and ATNG…AHAR. The segment covering 172 to 189 has biased composition (basic residues); it reads GHHHPVHHHHHHHGHHAH. The basic motif stretch occupies residues 223–248; the sequence is RLKQKRRTLKNRGYAQSCRYKRVQQR. In terms of domain architecture, bZIP spans 223 to 286; it reads RLKQKRRTLK…DLYKEKYEKL (64 aa). The interaction with DNA stretch occupies residues 229 to 243; the sequence is RTLKNRGYAQSCRYK. Positions 251–272 are leucine-zipper; that stretch reads LESEKCTLQSQVEQLKQDVARL. The tract at residues 290 to 315 is disordered; the sequence is AFNGGGNTRDPSSGNHVKTTSTDFFM. The span at 298 to 315 shows a compositional bias: polar residues; that stretch reads RDPSSGNHVKTTSTDFFM.

Belongs to the bZIP family. Maf subfamily.

It is found in the nucleus. In terms of biological role, transcription factor, possibly involved in transcription regulation during lens development, including that of crystallin genes. Specifically binds to the alphaCE2 enhancer element of crystallin gene. The sequence is that of Transcription factor MafAa (mafaa) from Danio rerio (Zebrafish).